The sequence spans 367 residues: Flagellar P-ring protein (367 aa).

The N-terminal stretch at 1-22 is a signal peptide; it reads MRRMLVIRWILAIHLIATQVFA.

It belongs to the FlgI family. As to quaternary structure, the basal body constitutes a major portion of the flagellar organelle and consists of four rings (L,P,S, and M) mounted on a central rod.

The protein localises to the periplasm. Its subcellular location is the bacterial flagellum basal body. Functionally, assembles around the rod to form the L-ring and probably protects the motor/basal body from shearing forces during rotation. This chain is Flagellar P-ring protein, found in Legionella pneumophila (strain Corby).